Reading from the N-terminus, the 558-residue chain is Receptor-like kinase LIP2 (558 aa).

The segment at 1–45 is disordered; sequence MHCFPCFSSPKNKKSSTTNETNDNNEPKPDDRRRAEETEEIEQSE. Residues 15–24 show a composition bias toward low complexity; the sequence is SSTTNETNDN. Over residues 25–36 the composition is skewed to basic and acidic residues; it reads NEPKPDDRRRAE. Thr-53 is subject to Phosphothreonine. The region spanning 64 to 343 is the Protein kinase domain; sequence FRQECLLGEG…SDVMVALSFL (280 aa). Residues 70 to 78 and Lys-93 each bind ATP; that span reads LGEGGFGRV. The residue at position 138 (Tyr-138) is a Phosphotyrosine. Asp-191 serves as the catalytic Proton acceptor. A phosphoserine mark is found at Ser-195 and Ser-227. The residue at position 233 (Thr-233) is a Phosphothreonine. Tyr-241 bears the Phosphotyrosine mark. The interval 372–558 is disordered; that stretch reads HDSNLVSPPP…SDVAIDSIKE (187 aa). The span at 401–418 shows a compositional bias: basic and acidic residues; sequence ESEKESVSKNEYKKKHEE. A compositionally biased stretch (acidic residues) spans 419–431; the sequence is EDSSMESDDESDS. Basic and acidic residues predominate over residues 432-448; that stretch reads NSEHEKDQPPKPIDEKN. A compositionally biased stretch (low complexity) spans 473 to 486; sequence SKSSQKSNDESTSS. 3 stretches are compositionally biased toward basic and acidic residues: residues 488-500, 508-524, and 547-558; these read YDSDRDQDEKGKE, EEKHTHIEHIDSSKTDD, and IKSDVAIDSIKE.

This sequence belongs to the protein kinase superfamily. Ser/Thr protein kinase family. In terms of assembly, interacts with PRK6. In terms of processing, palmitoylated. In terms of tissue distribution, expressed in mature pollen and in germinating pollen tubes.

It localises to the cell membrane. Its function is as follows. Involved in pollen tube guidance into micropyle. Participates in perception of the ovule-secreted peptide signal LURE1. The polypeptide is Receptor-like kinase LIP2 (Arabidopsis thaliana (Mouse-ear cress)).